A 274-amino-acid polypeptide reads, in one-letter code: Probable eukaryotic translation initiation factor 3 subunit J (274 aa).

Disordered regions lie at residues 1 to 110 (MDSW…KEAM) and 207 to 245 (KEQQEKTQSKRGAAAPAAKPVSTAAPSKKGGKPTVNVNS). Residues 38–47 (DEEDEDEEEN) are compositionally biased toward acidic residues. Positions 52–73 (QNDSHSVSQKSSSSSQNDQGSN) are enriched in low complexity. Over residues 82 to 110 (IQERNFEKAIKASEAAAKEESLESSKEAM) the composition is skewed to basic and acidic residues. The span at 219-234 (AAAPAAKPVSTAAPSK) shows a compositional bias: low complexity.

This sequence belongs to the eIF-3 subunit J family. Component of the eukaryotic translation initiation factor 3 (eIF-3) complex. The eIF-3 complex appears to include tif32/eif3a, SPAC25G10.08/eif3b, tif33/eif3c, SPBC4C3.07/eif3f, tif35/eif3g and sum1/eif3i. This set of common subunits may also associate exclusively with either moe1/eif3d and int6/eif3e, or with SPAC821.05/eif3h and SPAC1751.03/eif3m. The eIF-3 complex may also include SPAC3A12.13c/eif3j. Interacts with sad1.

It is found in the cytoplasm. Its function is as follows. Component of the eukaryotic translation initiation factor 3 (eIF-3) complex, which is involved in protein synthesis of a specialized repertoire of mRNAs and, together with other initiation factors, stimulates binding of mRNA and methionyl-tRNAi to the 40S ribosome. The eIF-3 complex specifically targets and initiates translation of a subset of mRNAs involved in cell proliferation. The chain is Probable eukaryotic translation initiation factor 3 subunit J from Schizosaccharomyces pombe (strain 972 / ATCC 24843) (Fission yeast).